Consider the following 448-residue polypeptide: Exodeoxyribonuclease 7 large subunit (448 aa).

The protein belongs to the XseA family. As to quaternary structure, heterooligomer composed of large and small subunits.

It is found in the cytoplasm. It carries out the reaction Exonucleolytic cleavage in either 5'- to 3'- or 3'- to 5'-direction to yield nucleoside 5'-phosphates.. In terms of biological role, bidirectionally degrades single-stranded DNA into large acid-insoluble oligonucleotides, which are then degraded further into small acid-soluble oligonucleotides. This Shewanella sp. (strain MR-4) protein is Exodeoxyribonuclease 7 large subunit.